A 261-amino-acid chain; its full sequence is UPF0246 protein Vapar_1301 (261 aa).

The protein belongs to the UPF0246 family.

This is UPF0246 protein Vapar_1301 from Variovorax paradoxus (strain S110).